The primary structure comprises 259 residues: 3-deoxy-manno-octulosonate cytidylyltransferase (259 aa).

It belongs to the KdsB family.

It is found in the cytoplasm. It carries out the reaction 3-deoxy-alpha-D-manno-oct-2-ulosonate + CTP = CMP-3-deoxy-beta-D-manno-octulosonate + diphosphate. It functions in the pathway nucleotide-sugar biosynthesis; CMP-3-deoxy-D-manno-octulosonate biosynthesis; CMP-3-deoxy-D-manno-octulosonate from 3-deoxy-D-manno-octulosonate and CTP: step 1/1. It participates in bacterial outer membrane biogenesis; lipopolysaccharide biosynthesis. Its function is as follows. Activates KDO (a required 8-carbon sugar) for incorporation into bacterial lipopolysaccharide in Gram-negative bacteria. This chain is 3-deoxy-manno-octulosonate cytidylyltransferase, found in Aeromonas salmonicida (strain A449).